The chain runs to 121 residues: Basic phospholipase A2 BbTX-III (121 aa).

3 residues coordinate Ca(2+): Tyr27, Gly29, and Gly31. Cystine bridges form between Cys28-Cys44, Cys43-Cys95, Cys49-Cys121, Cys50-Cys88, Cys58-Cys82, and Cys76-Cys86. His47 is a catalytic residue. Ca(2+) is bound at residue Asp48. Residue Asp89 is part of the active site.

Belongs to the phospholipase A2 family. Group II subfamily. D49 sub-subfamily. As to quaternary structure, homodimer; non-covalently linked. Ca(2+) is required as a cofactor. As to expression, expressed by the venom gland.

It localises to the secreted. The catalysed reaction is a 1,2-diacyl-sn-glycero-3-phosphocholine + H2O = a 1-acyl-sn-glycero-3-phosphocholine + a fatty acid + H(+). Its function is as follows. Snake venom phospholipase A2 (PLA2) that exhibits myotoxin and anticoagulant activity. Displays edema-inducing activities in mouse paw. Also displays cytotoxic activity against some cell lines and myotubes, and antimicrobial activities against E.coli, C.albicans and Leishmania. PLA2 catalyzes the calcium-dependent hydrolysis of the 2-acyl groups in 3-sn-phosphoglycerides. The chain is Basic phospholipase A2 BbTX-III from Bothrops brazili (Brazil's lancehead).